Here is a 77-residue protein sequence, read N- to C-terminus: Acyl carrier protein (77 aa).

A Carrier domain is found at 1–75 (MVFEKVKDII…DVVNYIKAHT (75 aa)). Residue serine 35 is modified to O-(pantetheine 4'-phosphoryl)serine.

It belongs to the acyl carrier protein (ACP) family. Post-translationally, 4'-phosphopantetheine is transferred from CoA to a specific serine of apo-ACP by AcpS. This modification is essential for activity because fatty acids are bound in thioester linkage to the sulfhydryl of the prosthetic group.

The protein resides in the cytoplasm. It functions in the pathway lipid metabolism; fatty acid biosynthesis. Carrier of the growing fatty acid chain in fatty acid biosynthesis. The polypeptide is Acyl carrier protein (Clostridium acetobutylicum (strain ATCC 824 / DSM 792 / JCM 1419 / IAM 19013 / LMG 5710 / NBRC 13948 / NRRL B-527 / VKM B-1787 / 2291 / W)).